Consider the following 287-residue polypeptide: Cyclopropane mycolic acid synthase 1 (287 aa).

S-adenosyl-L-methionine-binding positions include 33–34 (YS), 68–76 (LLDVGCGWG), 94–99 (TLSKNQ), and 123–124 (WE). The active site involves cysteine 269.

This sequence belongs to the CFA/CMAS family. As to quaternary structure, homodimer.

Its subcellular location is the cytoplasm. The enzyme catalyses a 1-acyl-2-(9Z)-enoyl-sn-glycero-3-phospholipid + S-adenosyl-L-methionine = a 1-acyl-2-(9-cyclopronane)-acyl-sn-glycero-3-phospholipid + S-adenosyl-L-homocysteine + H(+). It participates in lipid metabolism; mycolic acid biosynthesis. In terms of biological role, catalyzes the conversion of a double bond to a cyclopropane ring at the distal position of an alpha mycolic acid via the transfer of a methylene group from S-adenosyl-L-methionine. Cyclopropanated mycolic acids are key factors participating in cell envelope permeability, host immunomodulation and persistence. This is Cyclopropane mycolic acid synthase 1 (cmaA1) from Mycobacterium tuberculosis (strain CDC 1551 / Oshkosh).